We begin with the raw amino-acid sequence, 414 residues long: Alanine--glyoxylate aminotransferase (414 aa).

The N-terminal 23 residues, 1–23 (MFRALARASATLGPQVAGWARTM), are a transit peptide targeting the mitochondrion. Lys-231 carries the N6-(pyridoxal phosphate)lysine modification. At Lys-247 the chain carries N6-acetyllysine; alternate. An N6-succinyllysine; alternate modification is found at Lys-247. N6-acetyllysine is present on residues Lys-256 and Lys-334. Arg-382 is a substrate binding site. The short motif at 412 to 414 (NKL) is the Microbody targeting signal element.

Belongs to the class-V pyridoxal-phosphate-dependent aminotransferase family. In terms of assembly, homodimer. Pyridoxal 5'-phosphate is required as a cofactor.

It is found in the peroxisome. It localises to the mitochondrion matrix. It carries out the reaction L-serine + pyruvate = 3-hydroxypyruvate + L-alanine. The catalysed reaction is glyoxylate + L-alanine = glycine + pyruvate. Its function is as follows. Catalyzes the transamination of glyoxylate to glycine and contributes to the glyoxylate detoxification. In terms of biological role, catalyzes the transamination between L-serine and pyruvate and contributes to gluconeogenesis from the L-serine metabolism. The polypeptide is Alanine--glyoxylate aminotransferase (Felis catus (Cat)).